The following is a 186-amino-acid chain: Ribosome-recycling factor (186 aa).

It belongs to the RRF family.

Its subcellular location is the cytoplasm. Responsible for the release of ribosomes from messenger RNA at the termination of protein biosynthesis. May increase the efficiency of translation by recycling ribosomes from one round of translation to another. This Endomicrobium trichonymphae protein is Ribosome-recycling factor.